A 174-amino-acid chain; its full sequence is Nucleoside-triphosphatase THEP1 (174 aa).

ATP is bound by residues 8–15 (GIPGIGKS) and 99–106 (LIVIDEVG).

This sequence belongs to the THEP1 NTPase family.

It carries out the reaction a ribonucleoside 5'-triphosphate + H2O = a ribonucleoside 5'-diphosphate + phosphate + H(+). In terms of biological role, has nucleotide phosphatase activity towards ATP, GTP, CTP, TTP and UTP. May hydrolyze nucleoside diphosphates with lower efficiency. The protein is Nucleoside-triphosphatase THEP1 of Methanosarcina barkeri (strain Fusaro / DSM 804).